Here is a 388-residue protein sequence, read N- to C-terminus: Succinate--CoA ligase [ADP-forming] subunit beta (388 aa).

One can recognise an ATP-grasp domain in the interval lysine 9 to histidine 244. ATP-binding positions include lysine 46, glycine 53–glycine 55, glutamate 99, threonine 102, and glutamate 107. 2 residues coordinate Mg(2+): asparagine 199 and aspartate 213. Substrate is bound by residues asparagine 264 and glycine 321–valine 323.

It belongs to the succinate/malate CoA ligase beta subunit family. As to quaternary structure, heterotetramer of two alpha and two beta subunits. The cofactor is Mg(2+).

It carries out the reaction succinate + ATP + CoA = succinyl-CoA + ADP + phosphate. The enzyme catalyses GTP + succinate + CoA = succinyl-CoA + GDP + phosphate. It functions in the pathway carbohydrate metabolism; tricarboxylic acid cycle; succinate from succinyl-CoA (ligase route): step 1/1. Functionally, succinyl-CoA synthetase functions in the citric acid cycle (TCA), coupling the hydrolysis of succinyl-CoA to the synthesis of either ATP or GTP and thus represents the only step of substrate-level phosphorylation in the TCA. The beta subunit provides nucleotide specificity of the enzyme and binds the substrate succinate, while the binding sites for coenzyme A and phosphate are found in the alpha subunit. This is Succinate--CoA ligase [ADP-forming] subunit beta from Shewanella woodyi (strain ATCC 51908 / MS32).